The sequence spans 430 residues: tRNA(Ile)-lysidine synthase (430 aa).

21–26 is a binding site for ATP; that stretch reads SGGLDS.

The protein belongs to the tRNA(Ile)-lysidine synthase family.

The protein localises to the cytoplasm. It carries out the reaction cytidine(34) in tRNA(Ile2) + L-lysine + ATP = lysidine(34) in tRNA(Ile2) + AMP + diphosphate + H(+). Ligates lysine onto the cytidine present at position 34 of the AUA codon-specific tRNA(Ile) that contains the anticodon CAU, in an ATP-dependent manner. Cytidine is converted to lysidine, thus changing the amino acid specificity of the tRNA from methionine to isoleucine. This Salmonella newport (strain SL254) protein is tRNA(Ile)-lysidine synthase.